Reading from the N-terminus, the 216-residue chain is Probable methylthioribulose-1-phosphate dehydratase (216 aa).

Cys-87 is a substrate binding site. Positions 105 and 107 each coordinate Zn(2+). Glu-129 serves as the catalytic Proton donor/acceptor.

It belongs to the aldolase class II family. MtnB subfamily. The cofactor is Zn(2+).

Its subcellular location is the cytoplasm. The catalysed reaction is 5-(methylsulfanyl)-D-ribulose 1-phosphate = 5-methylsulfanyl-2,3-dioxopentyl phosphate + H2O. The protein operates within amino-acid biosynthesis; L-methionine biosynthesis via salvage pathway; L-methionine from S-methyl-5-thio-alpha-D-ribose 1-phosphate: step 2/6. Its function is as follows. Catalyzes the dehydration of methylthioribulose-1-phosphate (MTRu-1-P) into 2,3-diketo-5-methylthiopentyl-1-phosphate (DK-MTP-1-P). This is Probable methylthioribulose-1-phosphate dehydratase from Drosophila persimilis (Fruit fly).